The sequence spans 525 residues: MTQQTSQKHNPVLVVDFGAQYAQLIARRVREANIYSEVVPHTATVEEIKAKNPAALILSGGPSSVYADGAPSLDPQVLELGIPVFGICYGFQAMTHALGGTVANTGNREYGRTEMTVDGGILHADLEETHKVWMSHGDAVSVAPEGFVVTAHSEGAPVAAFECAEKRMAGVQYHPEVLHSPHGQEVMVRFLTEIAGLEQNWTAANIAEELIDAVCAQVGPEGRAICGLSGGVDSAVAAALVQRAIGDRLTCVFVDHGLLRAGEREQVQTDFVAATGAKLVTVDEREAFLNKLAGVTEPEAKRKAIGAEFIRSFERAVAGILDDAPEGSTVDFLVQGTLYPDVVESGGGSGTANIKSHHNVGGLPDDVEFQLVEPLRLLFKDEVRAVGRELGLPEEIVNRQPFPGPGLGIRIIGEVTEERLETLRAADLIARTELTAAGLDSEIWQCPVVLLADVRSVGVQGDGRTYGHPIVLRPVSSEDAMTADWTRLPYDVLEKISTRITNEVSDVNRVVLDCTSKPPGTIEWE.

The Glutamine amidotransferase type-1 domain maps to 11–200 (PVLVVDFGAQ…LTEIAGLEQN (190 aa)). Residue Cys-88 is the Nucleophile of the active site. Residues His-174 and Glu-176 contribute to the active site. Residues 201–399 (WTAANIAEEL…LGLPEEIVNR (199 aa)) enclose the GMPS ATP-PPase domain. 229 to 235 (SGGVDSA) lines the ATP pocket.

As to quaternary structure, homodimer.

The catalysed reaction is XMP + L-glutamine + ATP + H2O = GMP + L-glutamate + AMP + diphosphate + 2 H(+). Its pathway is purine metabolism; GMP biosynthesis; GMP from XMP (L-Gln route): step 1/1. Catalyzes the synthesis of GMP from XMP. The protein is GMP synthase [glutamine-hydrolyzing] of Corynebacterium diphtheriae (strain ATCC 700971 / NCTC 13129 / Biotype gravis).